We begin with the raw amino-acid sequence, 530 residues long: MRLNDITRGTGLEEHGITNANLIYWTPPTAVLYEQIVKRGEGLVTHLGAVAVKTGHYTGRAANEKFIVDEPSSNDHIAWGKVNQPFDSAKFDALFGRMLAYLHGKDIFVQECFAGCSPDHRLPVRVITERAWHSLFARNMFVRATPEELVGFKPGFTVIDLPAFHAIPSVDGTNTETFIIVNFEKRLIIIGGTSYAGEIKKSIFTILNYLLPQHKNVLSMHCSANVGEKDDVAVFFGLSGTGKTTLSADPRRRLIGDDEHGWDNSGVFNFEGGCYAKIINLSPEAEPEIYQTTRRFGTILENVAIDTVSRRIDLNDDSFTENTRASYPITHIPNIVKSGMGGHPTNIIMLTCDAFGVLPPIARLTPDQAMYHFLSGYTAKVAGTEAGITEPQAAFSACFGAPFMALHPSVYAKLLGEKIARHGVSCWLVNTGWSGGPYGVGSRMKIAYSRALVNAAIDGTLNAGSFVKDQFFGLDIPTGCSGVPAEVLNPKNTWVDKTKYDETATMLVERFRKNFEQYRSYVSAGVAEVM.

3 residues coordinate substrate: R60, Y195, and K201. ATP-binding positions include K201, H221, and 237 to 245 (GLSGTGKTT). K201 and H221 together coordinate Mn(2+). D258 contributes to the Mn(2+) binding site. E286, R324, and S449 together coordinate ATP. R324 lines the substrate pocket.

This sequence belongs to the phosphoenolpyruvate carboxykinase (ATP) family. Mn(2+) is required as a cofactor.

Its subcellular location is the cytoplasm. The catalysed reaction is oxaloacetate + ATP = phosphoenolpyruvate + ADP + CO2. The protein operates within carbohydrate biosynthesis; gluconeogenesis. Its function is as follows. Involved in the gluconeogenesis. Catalyzes the conversion of oxaloacetate (OAA) to phosphoenolpyruvate (PEP) through direct phosphoryl transfer between the nucleoside triphosphate and OAA. The protein is Phosphoenolpyruvate carboxykinase (ATP) of Geobacter metallireducens (strain ATCC 53774 / DSM 7210 / GS-15).